The following is a 902-amino-acid chain: 4-hydroxyphenylacetate decarboxylase glycyl radical subunit (902 aa).

One can recognise a PFL domain in the interval 38–774; sequence KRAEDLLDVY…ATLATPDGRL (737 aa). 4-hydroxyphenylacetate is bound by residues Ser348 and Cys507. Residue Cys507 is the Cysteine radical intermediate of the active site. Glu509 acts as the Proton donor in catalysis. Positions 540 and 641 each coordinate 4-hydroxyphenylacetate. Residues 782-902 form the Glycine radical domain; it reads GSVSAYAGTD…VIARTEYEGV (121 aa). Gly877 is modified (glycine radical).

Belongs to the glycyl radical enzyme (GRE) family. HPAD subfamily. As to quaternary structure, heterooctamer consisting of 4 large (HpdB) subunits and 4 small (HpdC) subunits, arranged as a tetramer of heterodimers. Also forms a catalytically inactive homodimer. In terms of processing, requires the activating protein CsdA to generate the key active site glycyl radical that is involved in catalysis. Phosphorylated on serine. Phosphorylation may trigger the formation of the active heterooctamers and thereby regulates enzyme activity.

It carries out the reaction 4-hydroxyphenylacetate + H(+) = 4-methylphenol + CO2. The catalysed reaction is 3,4-dihydroxyphenylacetate + H(+) = 4-methylcatechol + CO2. In terms of biological role, glycyl radical subunit of the HPA decarboxylase that decarboxylates phenylacetates with a hydroxyl group in the p-position. Active toward 4-hydroxyphenylacetate and 3,4-dihydroxyphenylacetate, forming 4-methylphenol and 4-methylcatechol, respectively. Is likely involved in the catabolism of aromatic amino acids such as tyrosine fermentation. 4-methylphenol (p-cresol) formation provides metabolic toxicity, which allows an active suppression of other microbes and may provide growth advantages for the producers in highly competitive environments. The large subunit is the catalytic subunit that binds the substrate. The sequence is that of 4-hydroxyphenylacetate decarboxylase glycyl radical subunit from Clostridioides difficile (strain 630) (Peptoclostridium difficile).